A 106-amino-acid chain; its full sequence is Urease subunit beta (106 aa).

The protein belongs to the urease beta subunit family. As to quaternary structure, heterotrimer of UreA (gamma), UreB (beta) and UreC (alpha) subunits. Three heterotrimers associate to form the active enzyme.

The protein resides in the cytoplasm. The enzyme catalyses urea + 2 H2O + H(+) = hydrogencarbonate + 2 NH4(+). The protein operates within nitrogen metabolism; urea degradation; CO(2) and NH(3) from urea (urease route): step 1/1. The polypeptide is Urease subunit beta (Escherichia coli O157:H7).